A 125-amino-acid chain; its full sequence is MPWRAQDHSVDCLTRSEVYALWAEAVNTLKRNLQVKNVSAHLLEDDAADVKDYIRANLSRFTVITGKCSRRTVCHHHRRVQRTLEPRQDLVNEYACSVTDVYRSPKWSICPTTCTRSRSPTTTPR.

Belongs to the baculoviridae LEF-11 family.

Its function is as follows. Involved in late/very late gene activation. The chain is Late expression factor 11 (LEF-11) from Orgyia pseudotsugata multicapsid polyhedrosis virus (OpMNPV).